The primary structure comprises 656 residues: Chromosomal replication initiator protein DnaA (656 aa).

Positions 1 to 100 (MADVPADLAA…TAGEPAGPAP (100 aa)) are domain I, interacts with DnaA modulators. A disordered region spans residues 91–313 (TAGEPAGPAP…PAPATGPGEP (223 aa)). The segment covering 97–109 (GPAPQAPQSPPSR) has biased composition (pro residues). Residues 101-315 (QAPQSPPSRP…PATGPGEPTA (215 aa)) are domain II. Composition is skewed to basic and acidic residues over residues 126 to 144 (GREE…RNRA) and 231 to 273 (QRGD…RDLP). Positions 291–313 (GPATGAPGPLAAQPAPATGPGEP) are enriched in low complexity. The tract at residues 316 to 532 (RLNPKYLFDT…GALIRVTAFA (217 aa)) is domain III, AAA+ region. Positions 360, 362, 363, and 364 each coordinate ATP. The domain IV, binds dsDNA stretch occupies residues 533–656 (SLNRQPVDLG…TELTNRIKNG (124 aa)).

This sequence belongs to the DnaA family. As to quaternary structure, oligomerizes as a right-handed, spiral filament on DNA at oriC.

The protein resides in the cytoplasm. Its function is as follows. Plays an essential role in the initiation and regulation of chromosomal replication. ATP-DnaA binds to the origin of replication (oriC) to initiate formation of the DNA replication initiation complex once per cell cycle. Binds the DnaA box (a 9 base pair repeat at the origin) and separates the double-stranded (ds)DNA. Forms a right-handed helical filament on oriC DNA; dsDNA binds to the exterior of the filament while single-stranded (ss)DNA is stabiized in the filament's interior. The ATP-DnaA-oriC complex binds and stabilizes one strand of the AT-rich DNA unwinding element (DUE), permitting loading of DNA polymerase. After initiation quickly degrades to an ADP-DnaA complex that is not apt for DNA replication. Binds acidic phospholipids. The sequence is that of Chromosomal replication initiator protein DnaA from Streptomyces coelicolor (strain ATCC BAA-471 / A3(2) / M145).